The sequence spans 355 residues: Peptide chain release factor 1 (355 aa).

Gln-233 is subject to N5-methylglutamine. Positions 280 to 293 (ERRKKEQERADSRR) are enriched in basic and acidic residues. The disordered stretch occupies residues 280–308 (ERRKKEQERADSRRGQVGSGDRSERIRTY).

Belongs to the prokaryotic/mitochondrial release factor family. Post-translationally, methylated by PrmC. Methylation increases the termination efficiency of RF1.

The protein localises to the cytoplasm. Functionally, peptide chain release factor 1 directs the termination of translation in response to the peptide chain termination codons UAG and UAA. The chain is Peptide chain release factor 1 from Rickettsia peacockii (strain Rustic).